We begin with the raw amino-acid sequence, 417 residues long: Neuropeptide FF receptor 2 (417 aa).

Residues 1–45 (MGKRWDSNSSGSWDHIWSGNDTQHPWYSDINITYMNYYLHQPHVT) are Extracellular-facing. Asparagine 8, asparagine 20, and asparagine 31 each carry an N-linked (GlcNAc...) asparagine glycan. Residues 46–66 (AVFISSYFLIFFLCMVGNTVV) traverse the membrane as a helical segment. The Cytoplasmic segment spans residues 67 to 82 (CFVVIRNRYMHTVTNF). The helical transmembrane segment at 83-103 (FIFNLAISDLLVGIFCMPITL) threads the bilayer. Residues 104–119 (LDNIIAGWPFGSSMCK) lie on the Extracellular side of the membrane. Cysteine 118 and cysteine 206 form a disulfide bridge. A helical transmembrane segment spans residues 120–140 (ISGLVQGISVAASVFTLVAIA). The Cytoplasmic segment spans residues 141-160 (VDRFRCVVYPFKPKLTVKTA). A helical transmembrane segment spans residues 161-181 (FVMIVIIWGLAITIMTPSAIM). Topologically, residues 182–217 (LHVQEEKYYRVRLSSHNKTSTVYWCREDWPNQEMRR) are extracellular. N-linked (GlcNAc...) asparagine glycosylation is present at asparagine 198. Residues 218–238 (IYTTVLFATIYLAPLSLIVIM) traverse the membrane as a helical segment. The Cytoplasmic portion of the chain corresponds to 239–274 (YARIGASLFKTSAHSTGKQRLEQWHVSKKKQKVIKM). A helical membrane pass occupies residues 275–295 (LLTVALLFILSWLPLWTLMML). Over 296-310 (SDYADLSPNKLRVIN) the chain is Extracellular. Residues 311-331 (IYVYPFAHWLAFCNSSVNPII) traverse the membrane as a helical segment. Topologically, residues 332-417 (YGFFNENFRS…TGEATNSTET (86 aa)) are cytoplasmic. Residues 378–417 (HEPASQNPSGENLGCRKSADNPTQESLMEETGEATNSTET) are disordered.

It belongs to the G-protein coupled receptor 1 family.

The protein resides in the cell membrane. Its function is as follows. Receptor for NPAF (A-18-F-amide) and NPFF (F-8-F-amide) neuropeptides, also known as morphine-modulating peptides. Can also be activated by a variety of naturally occurring or synthetic FMRF-amide like ligands. This receptor mediates its action by association with G proteins that activate a phosphatidylinositol-calcium second messenger system. This chain is Neuropeptide FF receptor 2 (Npffr2), found in Rattus norvegicus (Rat).